The primary structure comprises 670 residues: UvrABC system protein B (670 aa).

Residues 28–414 (NNFKQGLQEQ…KKIPIVEQII (387 aa)) form the Helicase ATP-binding domain. 41 to 48 (GATGTGKT) is an ATP binding site. A Beta-hairpin motif is present at residues 94-117 (YYDYYQPEAYVASSDTYIEKDSKI). One can recognise a Helicase C-terminal domain in the interval 432–594 (QMDDLYFEIK…VTPTALNKTI (163 aa)). The UVR domain occupies 631–666 (NKEIKRLQKMMKEAAKTLDFEKAATLRDLILELEKK).

The protein belongs to the UvrB family. As to quaternary structure, forms a heterotetramer with UvrA during the search for lesions. Interacts with UvrC in an incision complex.

The protein localises to the cytoplasm. In terms of biological role, the UvrABC repair system catalyzes the recognition and processing of DNA lesions. A damage recognition complex composed of 2 UvrA and 2 UvrB subunits scans DNA for abnormalities. Upon binding of the UvrA(2)B(2) complex to a putative damaged site, the DNA wraps around one UvrB monomer. DNA wrap is dependent on ATP binding by UvrB and probably causes local melting of the DNA helix, facilitating insertion of UvrB beta-hairpin between the DNA strands. Then UvrB probes one DNA strand for the presence of a lesion. If a lesion is found the UvrA subunits dissociate and the UvrB-DNA preincision complex is formed. This complex is subsequently bound by UvrC and the second UvrB is released. If no lesion is found, the DNA wraps around the other UvrB subunit that will check the other stand for damage. The polypeptide is UvrABC system protein B (Onion yellows phytoplasma (strain OY-M)).